The chain runs to 332 residues: Beta-ketoacyl-[acyl-carrier-protein] synthase III (332 aa).

Active-site residues include Cys116 and His255. Positions 256-260 are ACP-binding; the sequence is QANLR. Residue Asn285 is part of the active site.

It belongs to the thiolase-like superfamily. FabH family. Homodimer.

Its subcellular location is the cytoplasm. It carries out the reaction malonyl-[ACP] + acetyl-CoA + H(+) = 3-oxobutanoyl-[ACP] + CO2 + CoA. It functions in the pathway lipid metabolism; fatty acid biosynthesis. Catalyzes the condensation reaction of fatty acid synthesis by the addition to an acyl acceptor of two carbons from malonyl-ACP. Catalyzes the first condensation reaction which initiates fatty acid synthesis and may therefore play a role in governing the total rate of fatty acid production. Possesses both acetoacetyl-ACP synthase and acetyl transacylase activities. Its substrate specificity determines the biosynthesis of branched-chain and/or straight-chain of fatty acids. This chain is Beta-ketoacyl-[acyl-carrier-protein] synthase III, found in Helicobacter hepaticus (strain ATCC 51449 / 3B1).